A 759-amino-acid polypeptide reads, in one-letter code: TIR domain-containing adapter molecule 1 (759 aa).

The TRIF-NTD stretch occupies residues 1-153 (MACTGPSLSG…CGWDVLGDLG (153 aa)). The TRAF6-binding motif lies at 84-91 (ETPEEPPD). A pLxIS motif motif is present at residues 207 to 210 (LEIS). The residue at position 210 (serine 210) is a Phosphoserine. Lysine 229 is covalently cross-linked (Glycyl lysine isopeptide (Lys-Gly) (interchain with G-Cter in ubiquitin)). A disordered region spans residues 241–296 (EPAPMGCQEPEEMSWPPSVEAADSPVRPSSPGPGLPEVTTDACPASPHDPPEVPEI). Short sequence motifs (TRAF6-binding) lie at residues 248–255 (QEPEEMSW) and 299–309 (HYPVECTDVPA). Residues 340-426 (LSAQPRPPTP…PEPPPPELES (87 aa)) are disordered. The span at 351-365 (VPQTSPSFPSASTSP) shows a compositional bias: low complexity. Over residues 366 to 376 (FPSPSTPPEAH) the composition is skewed to pro residues. One can recognise a TIR domain in the interval 430–590 (KFYNFVVLHA…QDARALREQS (161 aa)). Residues 549-759 (LLDEHSKIFA…APEDNTRETE (211 aa)) are sufficient to induce apoptosis. Residues 642-723 (GQGSLGTPPS…PPARPQSPGL (82 aa)) form a disordered region. Over residues 659–705 (HQPPPLPPWLGGTPPPIFPQPPQTFPQPPPTFPQPPPTFQQPPPACP) the composition is skewed to pro residues.

As to quaternary structure, homodimer. Found in a multi-helicase-TICAM1 complex at least composed of DHX36, DDX1, DDX21 and TICAM1; this complex exists in resting cells with or without poly(I:C) RNA ligand stimulation. Interacts (via TIR domain) with DDX21 (via C-terminus). Interacts (via TIR domain) with DHX36 (via C-terminus). Interacts with AZI2 and IRF7. Interacts with TICAM2 in TLR4 recruitment. Interaction with PIAS4 inhibits the TICAM1-induced NF-kappa-B, IRF and IFNB1 activation. Interacts with IKBKB and IKBKE. Interaction with SARM1 blocks TICAM1-dependent transcription factor activation. Interacts with TRAF3. Interacts (when phosphorylated) with IRF3; following activation and phosphorylation on the pLxIS motif by TBK1, recruits IRF3. Interacts with TBK1, TRAF6 and RIPK1 and these interactions are enhanced in the presence of WDFY1. Interacts with TRAFD1. Interacts with UBQLN1 (via UBA domain). Interacts with TLR4 in response to LPS in a WDFY1-dependent manner. Interacts with WDFY1 in response to poly(I:C). Interacts (via the TIR domain) with TLR3 in response to poly(I:C) and this interaction is enhanced in the presence of WDFY1. Interacts with TRIM56. Component of a multi-helicase-TICAM1 complex that acts as a cytoplasmic sensor of viral double-stranded RNA (dsRNA) and plays a role in the activation of a cascade of antiviral responses including the induction of pro-inflammatory cytokines. Interacts (via the TIR domain) with TLR5. Interacts with TRIM8. Interacts with TAX1BP1 and TRIM32; these interactions target TICAM1 to TAX1BP1-mediated selective autophagic degradation. Interacts with DDX50. Post-translationally, phosphorylated by TBK1. Following activation, phosphorylated by TBK1 at Ser-210 in the pLxIS motif. The phosphorylated pLxIS motif constitutes an IRF3-binding motif, leading to recruitment of the transcription factor IRF3 to induce type-I interferons and other cytokines. Polyubiquitinated at Lys-229 by TRIM38 with 'Lys-48'-linked chains, leading to proteasomal degradation. Polyubiquitinated with 'Lys-6' and 'Lys-33'-linked chains in a TRIM8-dependent manner.

It is found in the cytoplasmic vesicle. The protein resides in the autophagosome. Its subcellular location is the cytoplasm. It localises to the cytosol. The protein localises to the mitochondrion. Functionally, involved in innate immunity against invading pathogens. Adapter used by TLR3, TLR4 (through TICAM2) and TLR5 to mediate NF-kappa-B and interferon-regulatory factor (IRF) activation, and to induce apoptosis. Ligand binding to these receptors results in TRIF recruitment through its TIR domain. Distinct protein-interaction motifs allow recruitment of the effector proteins TBK1, TRAF6 and RIPK1, which in turn, lead to the activation of transcription factors IRF3 and IRF7, NF-kappa-B and FADD respectively. Phosphorylation by TBK1 on the pLxIS motif leads to recruitment and subsequent activation of the transcription factor IRF3 to induce expression of type I interferon and exert a potent immunity against invading pathogens. Component of a multi-helicase-TICAM1 complex that acts as a cytoplasmic sensor of viral double-stranded RNA (dsRNA) and plays a role in the activation of a cascade of antiviral responses including the induction of pro-inflammatory cytokines. The chain is TIR domain-containing adapter molecule 1 (TICAM1) from Bos taurus (Bovine).